The chain runs to 381 residues: Anti-sigma-I factor RsgI (381 aa).

The Cytoplasmic portion of the chain corresponds to methionine 1–lysine 63. The region spanning arginine 2 to arginine 50 is the RsgI N-terminal anti-sigma domain. The chain crosses the membrane as a helical span at residues methionine 64–serine 84. At asparagine 85–glutamate 381 the chain is on the extracellular side. The tract at residues serine 198–glutamate 381 is disordered. 4 stretches are compositionally biased toward basic and acidic residues: residues methionine 200–glycine 210, serine 219–aspartate 244, glycine 273–asparagine 321, and serine 349–asparagine 359.

Interacts (via RsgI N-terminal anti-sigma domain) with SigI.

Its subcellular location is the cell membrane. Anti-sigma factor for SigI. Negatively regulates SigI activity through direct interaction. In Bacillus subtilis (strain 168), this protein is Anti-sigma-I factor RsgI.